The chain runs to 374 residues: N5-carboxyaminoimidazole ribonucleotide synthase (374 aa).

Residues R108, K148, 153-159, 183-186, E191, H214, and 266-267 each bind ATP; these read GYDGKGQ, EKYL, and NE. An ATP-grasp domain is found at 112–296; it reads KETLKSAGTK…QFDTHILAVT (185 aa).

The protein belongs to the PurK/PurT family. Homodimer.

It catalyses the reaction 5-amino-1-(5-phospho-beta-D-ribosyl)imidazole + hydrogencarbonate + ATP = 5-carboxyamino-1-(5-phospho-D-ribosyl)imidazole + ADP + phosphate + 2 H(+). It participates in purine metabolism; IMP biosynthesis via de novo pathway; 5-amino-1-(5-phospho-D-ribosyl)imidazole-4-carboxylate from 5-amino-1-(5-phospho-D-ribosyl)imidazole (N5-CAIR route): step 1/2. In terms of biological role, catalyzes the ATP-dependent conversion of 5-aminoimidazole ribonucleotide (AIR) and HCO(3)(-) to N5-carboxyaminoimidazole ribonucleotide (N5-CAIR). The chain is N5-carboxyaminoimidazole ribonucleotide synthase from Staphylococcus aureus (strain COL).